The following is a 630-amino-acid chain: ATP synthase subunit alpha (630 aa).

173–180 (GDRQTGKT) contributes to the ATP binding site. Residues 592–630 (AGGASTAADEDGAGDDEEEAPAPKAKSKNAKSASKAKEK) are disordered. Residues 599–611 (ADEDGAGDDEEEA) show a composition bias toward acidic residues.

It belongs to the ATPase alpha/beta chains family. In terms of assembly, F-type ATPases have 2 components, CF(1) - the catalytic core - and CF(0) - the membrane proton channel. CF(1) has five subunits: alpha(3), beta(3), gamma(1), delta(1), epsilon(1). CF(0) has three main subunits: a(1), b(2) and c(9-12). The alpha and beta chains form an alternating ring which encloses part of the gamma chain. CF(1) is attached to CF(0) by a central stalk formed by the gamma and epsilon chains, while a peripheral stalk is formed by the delta and b chains.

Its subcellular location is the cell inner membrane. The catalysed reaction is ATP + H2O + 4 H(+)(in) = ADP + phosphate + 5 H(+)(out). In terms of biological role, produces ATP from ADP in the presence of a proton gradient across the membrane. The alpha chain is a regulatory subunit. The protein is ATP synthase subunit alpha of Sorangium cellulosum (strain So ce56) (Polyangium cellulosum (strain So ce56)).